Consider the following 239-residue polypeptide: Xyloglucan-specific endo-beta-1,4-glucanase A (239 aa).

A signal peptide spans 1–14 (MKLLALSLASLASA). The N-linked (GlcNAc...) asparagine glycan is linked to Asn-172.

This sequence belongs to the glycosyl hydrolase 12 (cellulase H) family.

Its subcellular location is the secreted. The enzyme catalyses xyloglucan + H2O = xyloglucan oligosaccharides.. In terms of biological role, catalyzes endohydrolysis of 1,4-beta-D-glucosidic linkages in xyloglucan with retention of the beta-configuration of the glycosyl residues. Specific for xyloglucan and does not hydrolyze other cell wall components. Active against tamarind xyloglucan. This chain is Xyloglucan-specific endo-beta-1,4-glucanase A (xgeA), found in Emericella nidulans (strain FGSC A4 / ATCC 38163 / CBS 112.46 / NRRL 194 / M139) (Aspergillus nidulans).